Here is a 359-residue protein sequence, read N- to C-terminus: Nicotinate-nucleotide--dimethylbenzimidazole phosphoribosyltransferase (359 aa).

The active-site Proton acceptor is the glutamate 318.

Belongs to the CobT family. In terms of assembly, homodimer.

The enzyme catalyses 5,6-dimethylbenzimidazole + nicotinate beta-D-ribonucleotide = alpha-ribazole 5'-phosphate + nicotinate + H(+). It functions in the pathway nucleoside biosynthesis; alpha-ribazole biosynthesis; alpha-ribazole from 5,6-dimethylbenzimidazole: step 1/2. Its function is as follows. Catalyzes the synthesis of alpha-ribazole-5'-phosphate from nicotinate mononucleotide (NAMN) and 5,6-dimethylbenzimidazole (DMB). This Escherichia coli O9:H4 (strain HS) protein is Nicotinate-nucleotide--dimethylbenzimidazole phosphoribosyltransferase.